The sequence spans 198 residues: Nucleoid occlusion factor SlmA (198 aa).

In terms of domain architecture, HTH tetR-type spans 9-70 (RNRREEILQA…SLIEFIEDSL (62 aa)). Residues 33–52 (TTAKLAANVGVSEAALYRHF) constitute a DNA-binding region (H-T-H motif). Residues 119-144 (DRLQGRINQLFERIEVQLRQVLREKK) adopt a coiled-coil conformation.

The protein belongs to the nucleoid occlusion factor SlmA family. Homodimer. Interacts with FtsZ.

The protein resides in the cytoplasm. Its subcellular location is the nucleoid. Functionally, required for nucleoid occlusion (NO) phenomenon, which prevents Z-ring formation and cell division over the nucleoid. Acts as a DNA-associated cell division inhibitor that binds simultaneously chromosomal DNA and FtsZ, and disrupts the assembly of FtsZ polymers. SlmA-DNA-binding sequences (SBS) are dispersed on non-Ter regions of the chromosome, preventing FtsZ polymerization at these regions. This chain is Nucleoid occlusion factor SlmA, found in Yersinia enterocolitica serotype O:8 / biotype 1B (strain NCTC 13174 / 8081).